Consider the following 320-residue polypeptide: Methenyltetrahydromethanopterin cyclohydrolase (320 aa).

The protein belongs to the MCH family.

The protein localises to the cytoplasm. The enzyme catalyses 5,10-methenyl-5,6,7,8-tetrahydromethanopterin + H2O = N(5)-formyl-5,6,7,8-tetrahydromethanopterin + H(+). It participates in one-carbon metabolism; methanogenesis from CO(2); 5,10-methenyl-5,6,7,8-tetrahydromethanopterin from CO(2): step 3/3. In terms of biological role, catalyzes the reversible interconversion of 5-formyl-H(4)MPT to methenyl-H(4)MPT(+). In Methanothermobacter thermautotrophicus (strain ATCC 29096 / DSM 1053 / JCM 10044 / NBRC 100330 / Delta H) (Methanobacterium thermoautotrophicum), this protein is Methenyltetrahydromethanopterin cyclohydrolase (mch).